Consider the following 740-residue polypeptide: E3 ubiquitin-protein ligase WAV3 (740 aa).

The interval 14–105 is disordered; that stretch reads PRNSDAAAPD…AISNPSSPRS (92 aa). The segment covering 49–67 has biased composition (low complexity); sequence SGGSNPSTPRSTSSPSLRC. Residues 71 to 90 are compositionally biased toward polar residues; it reads DAQTPTAEQTSTPRSATKSP. An RING-type; atypical zinc finger spans residues 122 to 167; sequence CGICLNSVKTGQGTAKYTAECSHAFHFPCIADYVRKQGKLVCPVCN. A VWFA domain is found at 332-476; the sequence is DLVVVVDVGG…IPVTEHGFGE (145 aa). The tract at residues 677 to 709 is disordered; the sequence is QSQHQQQHNQRRRGSERETTTTMTLMDENGEPL.

In terms of assembly, interacts with SINAT1, SINAT2, SINAT3, SINAT4, SINAT5, TOR1/SPR2 and FIP2. In terms of tissue distribution, expressed in root tips and leaf primordia.

The enzyme catalyses S-ubiquitinyl-[E2 ubiquitin-conjugating enzyme]-L-cysteine + [acceptor protein]-L-lysine = [E2 ubiquitin-conjugating enzyme]-L-cysteine + N(6)-ubiquitinyl-[acceptor protein]-L-lysine.. Its function is as follows. E3 ubiquitin-protein ligase involved in the regulation of root growth. Acts as a positive regulator of root gravitropism. Possesses E3 protein ligase activity in vitro. This chain is E3 ubiquitin-protein ligase WAV3, found in Arabidopsis thaliana (Mouse-ear cress).